A 474-amino-acid chain; its full sequence is Cysteine--tRNA ligase (474 aa).

C27 provides a ligand contact to Zn(2+). The 'HIGH' region signature appears at 29–39 (PTVYNYIHIGN). Positions 212, 237, and 241 each coordinate Zn(2+). The 'KMSKS' region motif lies at 271–275 (KMSKS). K274 is an ATP binding site.

This sequence belongs to the class-I aminoacyl-tRNA synthetase family. Monomer. It depends on Zn(2+) as a cofactor.

The protein localises to the cytoplasm. The catalysed reaction is tRNA(Cys) + L-cysteine + ATP = L-cysteinyl-tRNA(Cys) + AMP + diphosphate. The protein is Cysteine--tRNA ligase of Lactobacillus delbrueckii subsp. bulgaricus (strain ATCC BAA-365 / Lb-18).